A 290-amino-acid polypeptide reads, in one-letter code: UPF0750 membrane protein YpjC (290 aa).

6 consecutive transmembrane segments (helical) span residues 9–29 (NIFF…HFNM), 47–67 (ALFH…IFFI), 75–95 (TMFV…SIFQ), 106–126 (DLAL…GIIF), 146–166 (FGIP…ILSL), and 179–199 (LVAV…GYAA).

The protein belongs to the UPF0750 family.

Its subcellular location is the cell membrane. This chain is UPF0750 membrane protein YpjC (ypjC), found in Bacillus subtilis (strain 168).